Reading from the N-terminus, the 1627-residue chain is DNA topoisomerase 2-beta (1627 aa).

Residues Asn-117, Asn-146, 174-176, and 187-194 each bind ATP; these read SSN and GRNGYGAK. Residues 368–370 are interaction with DNA; sequence KKK. Residue 402–404 coordinates ATP; sequence QTK. The 118-residue stretch at 481-598 folds into the Toprim domain; sequence CTLILTEGDS…SLLKHGFLEE (118 aa). The Mg(2+) site is built by Glu-487, Asp-567, and Asp-569. The Topo IIA-type catalytic domain occupies 741-1194; it reads IPSLVDGLKP…SASDLWKEDL (454 aa). The active-site O-(5'-phospho-DNA)-tyrosine intermediate is Tyr-831. Residues 1016–1025 are interaction with DNA; sequence KLQTSLTCNS. 4 disordered regions span residues 1115 to 1144, 1224 to 1248, 1283 to 1365, and 1378 to 1627; these read AWKE…GSTS, KVGK…RRIV, EFGG…DSLL, and DFSK…DMFN. Residues 1131–1144 show a composition bias toward low complexity; that stretch reads NANDDASSASGSTS. Residues 1296-1305 show a composition bias toward polar residues; it reads TVNTAASGTK. A compositionally biased stretch (basic and acidic residues) spans 1339-1349; it reads PWSDDESKSES. Composition is skewed to acidic residues over residues 1381–1392 and 1412–1428; these read KEEDDAHDDDDA and REDE…DEYD. Basic and acidic residues-rich tracts occupy residues 1436-1448 and 1462-1471; these read PSPE…KKNQ and KTDDDTTKLD. 2 stretches are compositionally biased toward basic residues: residues 1542 to 1552 and 1566 to 1578; these read GKGRGAKKRKT and KAPK…KSKK. Residues 1616–1627 are compositionally biased toward acidic residues; sequence ESDEDDDFDMFN.

The protein belongs to the type II topoisomerase family. Homodimer. The cofactor is Mg(2+). Mn(2+) is required as a cofactor. Ca(2+) serves as cofactor.

The protein resides in the nucleus. The protein localises to the nucleolus. It is found in the nucleoplasm. The catalysed reaction is ATP-dependent breakage, passage and rejoining of double-stranded DNA.. Key decatenating enzyme that alters DNA topology by binding to two double-stranded DNA molecules, generating a double-stranded break in one of the strands, passing the intact strand through the broken strand, and religating the broken strand. Plays a role in B-cell differentiation. This is DNA topoisomerase 2-beta (TOP2B) from Gallus gallus (Chicken).